The chain runs to 142 residues: Pro-vaccinia growth factor (142 aa).

An N-terminal signal peptide occupies residues 1–18 (MSMKYLMLLFAAMIIRSF). At 19 to 100 (ADSGNAIETT…SENPNTTTSY (82 aa)) the chain is on the extracellular side. Residue N34 is glycosylated (N-linked (GlcNAc...) asparagine; by host). Residues 41-81 (AIRLCGPEGDGYCLHGDCIHARDIDGMYCRCSHGYTGIRCQ) enclose the EGF-like domain. 3 disulfide bridges follow: C45/C58, C53/C69, and C71/C80. The N-linked (GlcNAc...) asparagine; by host glycan is linked to N95. The chain crosses the membrane as a helical span at residues 101–121 (IPSPGIMLVLVGIIIIITCCL). The Cytoplasmic portion of the chain corresponds to 122-142 (LSVYRFTRRTNKLPLQDMVVP).

Belongs to the orthopoxvirus OPG019 family. Vaccinia growth factor interacts with host EGFR and promotes EGFR dimerization.

The protein resides in the host membrane. It is found in the secreted. Stimulates cellular proliferation (hyperplasia)and mobility around infected cells to promote rapid and efficient spread of infection. This effect is beneficial for virus replication in vivo, because poxviruses replicate possibly better in proliferating cells than in quiescent cells. Acts by binding host EGFR, inducing its dimerization, autophosphorylation and leading to activation of several cellular pathways regulating cell proliferation or cell survival. The activation by host EGFR of mitogen activated protein kinases (MAPK) and extracellular-signal regulated kinases (ERK) are essential for the positive effect of vaccinia growth factor on poxvirus virulence in vivo. The protein is Pro-vaccinia growth factor (OPG019) of Vaccinia virus (strain Copenhagen) (VACV).